The following is a 568-amino-acid chain: Estrogen receptor beta-1 (568 aa).

The tract at residues 12-169 (SEYAEGDSSL…SLRGKADMHY (158 aa)) is modulating. 2 NR C4-type zinc fingers span residues 170–190 (CAVC…CEGC) and 206–230 (CPAT…LRKC). The segment at residues 170–235 (CAVCSDYASG…RLRKCYEVGM (66 aa)) is a DNA-binding region (nuclear receptor). The NR LBD domain maps to 292–528 (SPEELIARIM…DLLLEMLDAH (237 aa)).

It belongs to the nuclear hormone receptor family. NR3 subfamily. In terms of assembly, binds DNA as a homodimer. Can form a heterodimer with ER-alpha.

The protein resides in the nucleus. In terms of biological role, binds estrogens with an affinity similar to that of ER-alpha, and activates expression of reporter genes containing estrogen response elements (ERE) in an estrogen-dependent manner. This chain is Estrogen receptor beta-1 (esr2a), found in Carassius auratus (Goldfish).